Consider the following 67-residue polypeptide: Bombesin (67 aa).

The signal sequence occupies residues 1–30; it reads MLLLSAVKTLLLAWLGIVLVFMSIIKSAML. The propeptide occupies 31–49; the sequence is DFLQEAGKLEGIETYKKEA. Gln-50 bears the Pyrrolidone carboxylic acid mark. Met-64 is modified (methionine amide).

As to expression, expressed by the skin glands.

The protein localises to the secreted. Functionally, stimulates smooth muscle contraction in isolated rat stomach strip. The polypeptide is Bombesin (Rana shuchinae (Sichuan frog)).